The primary structure comprises 211 residues: Stromal cell-derived factor 2 (211 aa).

The signal sequence occupies residues 1–18 (MAVVPLLLLGGLWSAVGA). MIR domains are found at residues 21–75 (LGVV…IRGK), 83–138 (GTPI…VLCN), and 139–193 (GPYW…AMEG).

Its subcellular location is the secreted. The sequence is that of Stromal cell-derived factor 2 (SDF2) from Homo sapiens (Human).